The primary structure comprises 505 residues: Putative thymidine phosphorylase (505 aa).

This sequence belongs to the thymidine/pyrimidine-nucleoside phosphorylase family. Type 2 subfamily.

It carries out the reaction thymidine + phosphate = 2-deoxy-alpha-D-ribose 1-phosphate + thymine. This chain is Putative thymidine phosphorylase, found in Hahella chejuensis (strain KCTC 2396).